The primary structure comprises 319 residues: ATP-dependent 6-phosphofructokinase (319 aa).

An ATP-binding site is contributed by G11. ADP is bound at residue 21–25 (RAVVR). Residues 72-73 (RC) and 102-105 (GNGS) contribute to the ATP site. N103 contributes to the Mg(2+) binding site. 125–127 (TID) lines the substrate pocket. The active-site Proton acceptor is D127. R154 lines the ADP pocket. Substrate contacts are provided by residues R162 and 169–171 (MGR). ADP is bound by residues 185 to 187 (GAE), R211, and 213 to 215 (KMH). Substrate-binding positions include E222, R243, and 249 to 252 (HIQR).

Belongs to the phosphofructokinase type A (PFKA) family. ATP-dependent PFK group I subfamily. Prokaryotic clade 'B1' sub-subfamily. As to quaternary structure, homotetramer. The cofactor is Mg(2+).

Its subcellular location is the cytoplasm. It catalyses the reaction beta-D-fructose 6-phosphate + ATP = beta-D-fructose 1,6-bisphosphate + ADP + H(+). The protein operates within carbohydrate degradation; glycolysis; D-glyceraldehyde 3-phosphate and glycerone phosphate from D-glucose: step 3/4. With respect to regulation, allosterically activated by ADP and other diphosphonucleosides, and allosterically inhibited by phosphoenolpyruvate. Catalyzes the phosphorylation of D-fructose 6-phosphate to fructose 1,6-bisphosphate by ATP, the first committing step of glycolysis. The chain is ATP-dependent 6-phosphofructokinase from Clostridium acetobutylicum (strain ATCC 824 / DSM 792 / JCM 1419 / IAM 19013 / LMG 5710 / NBRC 13948 / NRRL B-527 / VKM B-1787 / 2291 / W).